Here is a 393-residue protein sequence, read N- to C-terminus: Serine/threonine protein kinase AFUB_078980 (393 aa).

Residues 61 to 390 enclose the Protein kinase domain; that stretch reads YQVLSKLGFG…APELLTDPWL (330 aa). Residues 67-75 and lysine 90 each bind ATP; that span reads LGFGANSTV. Aspartate 190 functions as the Proton acceptor in the catalytic mechanism.

The protein belongs to the protein kinase superfamily. CMGC Ser/Thr protein kinase family.

The enzyme catalyses L-seryl-[protein] + ATP = O-phospho-L-seryl-[protein] + ADP + H(+). It catalyses the reaction L-threonyl-[protein] + ATP = O-phospho-L-threonyl-[protein] + ADP + H(+). In terms of biological role, serine/threonine protein kinase; part of the subtelomeric hrmA-associated cluster (HAC) containing genes that alter the hyphal surface (such as reduced total chitin or increased beta-glucan exposure) and perturb inter-hyphal interactions within the developing biofilms, resulting in a loss of vertically aligned polarized growing filaments. Consequently, this hypoxia-typic morphotype (called H-MORPH) with altered biofilm architecture leads to increased hypoxia fitness, increased host inflammation, rapid disease progression, and mortality in a murine model of invasive aspergillosis. This Aspergillus fumigatus (strain CBS 144.89 / FGSC A1163 / CEA10) (Neosartorya fumigata) protein is Serine/threonine protein kinase AFUB_078980.